We begin with the raw amino-acid sequence, 188 residues long: ATP synthase subunit b (188 aa).

The chain crosses the membrane as a helical span at residues 5–25; that stretch reads MLLIFMMIVMIASSAMAAEAE.

The protein belongs to the ATPase B chain family. As to quaternary structure, F-type ATPases have 2 components, F(1) - the catalytic core - and F(0) - the membrane proton channel. F(1) has five subunits: alpha(3), beta(3), gamma(1), delta(1), epsilon(1). F(0) has three main subunits: a(1), b(2) and c(10-14). The alpha and beta chains form an alternating ring which encloses part of the gamma chain. F(1) is attached to F(0) by a central stalk formed by the gamma and epsilon chains, while a peripheral stalk is formed by the delta and b chains.

The protein resides in the cell inner membrane. Its function is as follows. F(1)F(0) ATP synthase produces ATP from ADP in the presence of a proton or sodium gradient. F-type ATPases consist of two structural domains, F(1) containing the extramembraneous catalytic core and F(0) containing the membrane proton channel, linked together by a central stalk and a peripheral stalk. During catalysis, ATP synthesis in the catalytic domain of F(1) is coupled via a rotary mechanism of the central stalk subunits to proton translocation. Functionally, component of the F(0) channel, it forms part of the peripheral stalk, linking F(1) to F(0). This is ATP synthase subunit b from Thermodesulfovibrio yellowstonii (strain ATCC 51303 / DSM 11347 / YP87).